The following is a 438-amino-acid chain: UDP-N-acetylmuramoylalanine--D-glutamate ligase (438 aa).

Position 112–118 (112–118 (GSNGKST)) interacts with ATP.

It belongs to the MurCDEF family.

It localises to the cytoplasm. It carries out the reaction UDP-N-acetyl-alpha-D-muramoyl-L-alanine + D-glutamate + ATP = UDP-N-acetyl-alpha-D-muramoyl-L-alanyl-D-glutamate + ADP + phosphate + H(+). Its pathway is cell wall biogenesis; peptidoglycan biosynthesis. Its function is as follows. Cell wall formation. Catalyzes the addition of glutamate to the nucleotide precursor UDP-N-acetylmuramoyl-L-alanine (UMA). The polypeptide is UDP-N-acetylmuramoylalanine--D-glutamate ligase (Salmonella paratyphi A (strain ATCC 9150 / SARB42)).